Reading from the N-terminus, the 343-residue chain is ATP-dependent (S)-NAD(P)H-hydrate dehydratase (343 aa).

A mitochondrion-targeting transit peptide spans 1–42; that stretch reads MAVCPYGAAAVVMALLSAAIAFHCSPLLAVLQRALSLHTAHA. One can recognise a YjeF C-terminal domain in the interval 49–340; sequence LFQLVRNIVP…AEVGAAFSKL (292 aa). K63 is subject to N6-acetyllysine. Y81 carries the phosphotyrosine modification. (6S)-NADPHX-binding positions include G149 and 202–208; that span reads NHVEFSR. Residues 242-246 and 261-270 contribute to the ATP site; these read KGEQD and GSSRRCGGQG. D271 lines the (6S)-NADPHX pocket.

Belongs to the NnrD/CARKD family. Requires Mg(2+) as cofactor.

It localises to the mitochondrion. It catalyses the reaction (6S)-NADHX + ATP = ADP + phosphate + NADH + H(+). It carries out the reaction (6S)-NADPHX + ATP = ADP + phosphate + NADPH + H(+). In terms of biological role, catalyzes the dehydration of the S-form of NAD(P)HX at the expense of ATP, which is converted to ADP. Together with NAD(P)HX epimerase, which catalyzes the epimerization of the S- and R-forms, the enzyme allows the repair of both epimers of NAD(P)HX, a damaged form of NAD(P)H that is a result of enzymatic or heat-dependent hydration. The protein is ATP-dependent (S)-NAD(P)H-hydrate dehydratase of Rattus norvegicus (Rat).